Reading from the N-terminus, the 694-residue chain is Lon-like protease BrxL (694 aa).

It belongs to the BrxL family.

BREX systems (bacteriophage exclusion) provide immunity against bacteriophage. Part of a type 1 BREX system which protects against dsDNA phage. This system allows phage adsorption but prevents phage DNA replication, without degradation of the phage DNA. Methylation of bacterial DNA by PglX guides self/non-self discrimination. When the brxA-brxB-brxC-pglX-pglZ-brxL genes are transformed into a susceptible E.coli strain (BW25113) they confer very high resistance to infection by bacteriophage VR7 and VpaE1, about 100-fold protection against lambda, T5 and T7 and no protection against RNA phage Qbeta, ssDNA phage M13 or dSDNA phage T4 and VR5. Glycosylated phage DNA is not susceptible to BREX. The BREX system does not confer resistance to lysogenic lambda phage, i.e. prophage that are integrated into the chromosomal DNA and then induced to form phage. Expression of this protein alone is toxic. This chain is Lon-like protease BrxL, found in Escherichia coli O9:H4 (strain HS).